A 410-amino-acid chain; its full sequence is DNA replication and repair protein RecF (410 aa).

30–37 (GPNGHGKT) is an ATP binding site.

The protein belongs to the RecF family.

The protein resides in the cytoplasm. Functionally, the RecF protein is involved in DNA metabolism; it is required for DNA replication and normal SOS inducibility. RecF binds preferentially to single-stranded, linear DNA. It also seems to bind ATP. This chain is DNA replication and repair protein RecF, found in Rhodococcus jostii (strain RHA1).